We begin with the raw amino-acid sequence, 1883 residues long: Transmembrane protein 131 (1883 aa).

Positions 1–22 (MGKRAGGGATGATTAAVSTSAG) are cleaved as a signal peptide. The Lumenal segment spans residues 23–1117 (AGLEPAAARS…AEALPRPNWE (1095 aa)). A papD-L domain region spans residues 109–283 (RFEPPMLDFH…ETKGVMRASF (175 aa)). An N-linked (GlcNAc...) asparagine glycan is attached at asparagine 300. A Phosphoserine modification is found at serine 803. The helical transmembrane segment at 1118-1138 (LALYIIISGIMSALFLLVIGT) threads the bilayer. The Cytoplasmic segment spans residues 1139–1883 (AYLEAQGIWE…WSNSHFPHEN (745 aa)). Disordered stretches follow at residues 1198–1580 (GAGG…DSLY), 1593–1656 (LKQR…KNGN), 1670–1712 (PGGN…PVSN), 1766–1789 (WESPATDPSPSWPASSGSPTHTAT), and 1832–1858 (MGTENSPAPHAPSTSSPADDLGQTYNP). The segment covering 1237-1261 (AKNSSSTSSRTSAQAASSQSANKTS) has biased composition (low complexity). Positions 1302 to 1316 (PQPPLPPPVPQPQEP) are enriched in pro residues. Residues serine 1322 and serine 1342 each carry the phosphoserine modification. Basic and acidic residues-rich tracts occupy residues 1330–1343 (SHPERASSARHSSE) and 1353–1364 (AMDKDFDHHDSP). Serine 1375 bears the Phosphoserine mark. Over residues 1380-1394 (SKGKGKPLQRKVKPP) the composition is skewed to basic residues. Basic and acidic residues predominate over residues 1395–1417 (KKQEEKEKKGKGKPQEDELKDSL). Residues 1423–1434 (SSTTTETSNPDT) are compositionally biased toward low complexity. Basic and acidic residues predominate over residues 1436–1458 (PLLKEDTEKQKGKQAMPEKHESE). 2 stretches are compositionally biased toward polar residues: residues 1510 to 1526 (AMTSGSKSRNAQKTKGT) and 1542 to 1553 (PNSQELGNTSSS). A compositionally biased stretch (pro residues) spans 1602-1611 (PASPSPPAAP). Over residues 1619–1630 (SYSSIVNSSSSS) the composition is skewed to low complexity. Positions 1678–1690 (VSSNKTGFSSSLG) are enriched in polar residues. Low complexity-rich tracts occupy residues 1773 to 1784 (PSPSWPASSGSP) and 1837 to 1849 (SPAPHAPSTSSPA). Phosphoserine is present on residues serine 1863 and serine 1871.

It belongs to the TMEM131 family. Interacts (via PapD-L domain) with COL1A2 (via C-terminus); the interaction is direct, may occur with other collagen proteins, and is involved in assembly and TRAPPIII ER-to-Golgi transport complex-dependent secretion of collagen. Interacts (via C-terminus) with TRAPPC8 (via C-terminus); the interaction is direct.

It is found in the membrane. In terms of biological role, collagen binding transmembrane protein involved in collagen secretion by recruiting the ER-to-Golgi transport complex TRAPPIII. May play a role in the immune response to viral infection. The protein is Transmembrane protein 131 of Homo sapiens (Human).